A 598-amino-acid chain; its full sequence is uncharacterized protein (598 aa).

Serine 46 is modified (phosphoserine). Positions 106-441 (LQNHLKTGPF…ADYISLSYSG (336 aa)) constitute an SAC domain. 2 helical membrane passes run 508–528 (TIRC…MTLF) and 535–555 (ILPP…SLYY).

Its subcellular location is the endoplasmic reticulum membrane. This is an uncharacterized protein from Schizosaccharomyces pombe (strain 972 / ATCC 24843) (Fission yeast).